The chain runs to 175 residues: Glycine-rich RNA-binding protein 1 (175 aa).

Residues 3-81 (AKVYVGNLSW…RRIRVNMANS (79 aa)) form the RRM domain. Positions 114–175 (GQPGGFQQPG…GYGGYNGQSQ (62 aa)) are disordered. Positions 122-131 (PGGFQQQGGY) are enriched in low complexity. The span at 132 to 141 (PQQGGYGGYQ) shows a compositional bias: gly residues. The span at 142–162 (QPGFQPQQGGYGAPQQGYGAP) shows a compositional bias: low complexity. The span at 163 to 175 (QQGGYGGYNGQSQ) shows a compositional bias: gly residues.

It belongs to the glycine-rich RNA-binding protein family. As to quaternary structure, part of large ribonucleoprotein complexes (mRNPs) containing RNA-binding proteins RRM4 and PAB1, endosome-binding protein UPA1, core scaffold protein UPA2 and associated factor GRP1.

The protein localises to the endosome. In terms of biological role, component of endosomal mRNA transport that regulates polarity of the infectious hyphae by transporting a broad spectrum of cargo mRNAs from the nucleus to cell poles. This chain is Glycine-rich RNA-binding protein 1, found in Mycosarcoma maydis (Corn smut fungus).